We begin with the raw amino-acid sequence, 312 residues long: Serine protease 48 (312 aa).

The signal sequence occupies residues 1 to 22 (MGPAGLKVLLLLFLGAFQGSFT). The region spanning 40 to 276 (IVGGQDAALG…YQKWISAIIS (237 aa)) is the Peptidase S1 domain. A disulfide bridge links Cys-65 with Cys-81. Residues His-80 and Asp-126 each act as charge relay system in the active site. N-linked (GlcNAc...) asparagine glycosylation occurs at Asn-149. Intrachain disulfides connect Cys-160/Cys-235, Cys-190/Cys-214, and Cys-225/Cys-253. Catalysis depends on Ser-229, which acts as the Charge relay system. A glycan (N-linked (GlcNAc...) asparagine) is linked at Asn-263.

It belongs to the peptidase S1 family.

The protein localises to the secreted. This chain is Serine protease 48 (Prss48), found in Mus musculus (Mouse).